Consider the following 109-residue polypeptide: Parvalbumin beta-1 (109 aa).

Serine 2 carries the N-acetylserine modification. EF-hand domains follow at residues 39–74 and 78–109; these read KSHEEVKKAFFVIDQDQSGFIEEDELKLFLQTFGAG and LTAAETKAFLAAGDEDGDGMIGVDEFVTLVKA. Ca(2+)-binding residues include aspartate 52, aspartate 54, serine 56, phenylalanine 58, glutamate 60, glutamate 63, aspartate 91, aspartate 93, aspartate 95, methionine 97, and glutamate 102.

Belongs to the parvalbumin family.

Functionally, in muscle, parvalbumin is thought to be involved in relaxation after contraction. It binds two calcium ions. This is Parvalbumin beta-1 from Gadus chalcogrammus (Alaska pollock).